The chain runs to 204 residues: Tat proofreading chaperone DmsD (204 aa).

The protein belongs to the TorD/DmsD family. DmsD subfamily. In terms of assembly, monomer in solution.

Its function is as follows. Required for biogenesis/assembly of DMSO reductase, but not for the interaction of the DmsA signal peptide with the Tat system. May be part of a chaperone cascade complex that facilitates a folding-maturation pathway for the substrate protein. This chain is Tat proofreading chaperone DmsD, found in Salmonella typhimurium (strain LT2 / SGSC1412 / ATCC 700720).